A 467-amino-acid chain; its full sequence is Probable receptor-like protein kinase At3g17420 (467 aa).

Positions 1–35 are cleaved as a signal peptide; that stretch reads MTSQLKRTLTKRYGVLELWEIIVIALFAAFIVILV. Residues 36 to 123 are Extracellular-facing; that stretch reads LSVWLSFRKK…LPPSTPSTTA (88 aa). Asn-50 carries N-linked (GlcNAc...) asparagine glycosylation. A Phosphoserine modification is found at Ser-70. An N-linked (GlcNAc...) asparagine glycan is attached at Asn-79. A disordered region spans residues 102-126; that stretch reads GSLEKKPLVGSHLPPSTPSTTAPSP. The helical transmembrane segment at 124 to 144 threads the bilayer; sequence PSPLLGLPEVSHIGWGHWFTL. Residues 145 to 467 lie on the Cytoplasmic side of the membrane; it reads RDLQLATNHF…DNDITTDAKI (323 aa). Residues 154 to 433 form the Protein kinase domain; sequence FSKESIIGDG…MLESDEYPVM (280 aa). ATP-binding positions include 160–168 and Lys-182; that span reads IGDGGYGVV. At Tyr-227 the chain carries Phosphotyrosine. Asp-280 acts as the Proton acceptor in catalysis. Ser-284 and Ser-313 each carry phosphoserine. Residues Thr-314 and Thr-319 each carry the phosphothreonine modification. Tyr-327 carries the post-translational modification Phosphotyrosine. The interval 413 to 467 is disordered; that stretch reads DKRPKMSQVARMLESDEYPVMPREERRRRRNQNAETHRESTDTNKDNDITTDAKI. The segment covering 447–467 has biased composition (basic and acidic residues); it reads ETHRESTDTNKDNDITTDAKI.

The protein belongs to the protein kinase superfamily. Ser/Thr protein kinase family.

Its subcellular location is the cell membrane. It catalyses the reaction L-seryl-[protein] + ATP = O-phospho-L-seryl-[protein] + ADP + H(+). It carries out the reaction L-threonyl-[protein] + ATP = O-phospho-L-threonyl-[protein] + ADP + H(+). The sequence is that of Probable receptor-like protein kinase At3g17420 from Arabidopsis thaliana (Mouse-ear cress).